The following is a 419-amino-acid chain: Methyltransferase/ribosomally synthesized type I borosin cyclic peptide precursor gjuMa (419 aa).

Residues 1 to 255 (MATPIATTTN…AISTLYVPPR (255 aa)) form a methyltransferase domain region. Active-site residues include R79, Y83, and Y105. Y105, H107, V110, A137, Q179, G217, S248, and T249 together coordinate S-adenosyl-L-methionine. A clasp domain region spans residues 256 to 381 (DISPVDPTMA…GAVYALMSRP (126 aa)). Positions 382 to 404 (TGDIAREKELTNDEIANNHGAPY) are precursor leader. S408 is subject to N-methylserine. A409 is subject to N-methylalanine. Position 410 is an N-methylvaline (V410). N-methylisoleucine is present on residues I411 and I412. An N-methylalanine mark is found at A413 and A414. N-methylisoleucine occurs at positions 415 and 416.

This sequence in the N-terminal section; belongs to the precorrin methyltransferase family. As to quaternary structure, homodimer. In terms of processing, gjuMA automethylates at Ser-408, Ala-409, Val-410, Ile-411, Ile-412, Ala-413, Ala-414, Ile-415 and Ile-416 before being processed by ae prolyloligopeptidase which likely forms a peptidyl ester upon removal of the follower propeptide, which then undergoes macrocyclization with the N-terminus of the modified core peptide. Peptide backbone alpha-N-methylations change the physicochemical properties of amide bonds to provide structural constraints and other favorable characteristics including biological membrane permeability to peptides.

It functions in the pathway secondary metabolite biosynthesis. In terms of biological role, fusion protein of the methyltransferase gjuM and the type I borosin core peptide; part of the gene cluster that mediates the biosynthesis of a type I borosin, a highly methylated cyclic peptide with potent biological activities. Type I borosins derive from the C-terminus of the fusion protein, and it is the same protein that methylates its own C-terminus using S-adenosyl methionine (SAM). The C-terminus is subsequently cleaved off and macrocyclized by a prolyloligopeptidase to give the final product. This is Methyltransferase/ribosomally synthesized type I borosin cyclic peptide precursor gjuMa from Gymnopilus junonius (Spectacular rustgill mushroom).